The following is a 206-amino-acid chain: RNA pyrophosphohydrolase (206 aa).

The Nudix hydrolase domain occupies 6–149 (GYRPNVGIVL…KRGVYARALR (144 aa)). Residues 38-59 (GGMNTDETPVEAMYRELQEETG) carry the Nudix box motif. Residues 175 to 206 (MPGHTAGHDRPRKRPRSRGYWPKKAQGDVPPT) form a disordered region.

It belongs to the Nudix hydrolase family. RppH subfamily. The cofactor is a divalent metal cation.

In terms of biological role, accelerates the degradation of transcripts by removing pyrophosphate from the 5'-end of triphosphorylated RNA, leading to a more labile monophosphorylated state that can stimulate subsequent ribonuclease cleavage. The sequence is that of RNA pyrophosphohydrolase from Stenotrophomonas maltophilia (strain R551-3).